Reading from the N-terminus, the 102-residue chain is uncharacterized protein (102 aa).

This is an uncharacterized protein from Haemophilus influenzae (strain ATCC 51907 / DSM 11121 / KW20 / Rd).